Consider the following 192-residue polypeptide: Putative acetyltransferase YjbC (192 aa).

The N-acetyltransferase domain maps to 1-139 (MNWYEKLSEY…MEILYWSPKT (139 aa)).

It localises to the cytoplasm. The protein is Putative acetyltransferase YjbC (yjbC) of Bacillus subtilis (strain 168).